A 440-amino-acid polypeptide reads, in one-letter code: Xylose isomerase (440 aa).

Active-site residues include histidine 101 and aspartate 104. 7 residues coordinate Mg(2+): glutamate 232, glutamate 268, histidine 271, aspartate 296, aspartate 307, aspartate 309, and aspartate 339.

It belongs to the xylose isomerase family. As to quaternary structure, homotetramer. Requires Mg(2+) as cofactor.

It is found in the cytoplasm. It carries out the reaction alpha-D-xylose = alpha-D-xylulofuranose. The polypeptide is Xylose isomerase (Salmonella agona (strain SL483)).